Consider the following 548-residue polypeptide: Spindle pole body-associated protein cut12 (548 aa).

The interaction with plo1 stretch occupies residues 122 to 325 (FKSPLLQSTP…GQQSKYKGKE (204 aa)). The tract at residues 123-182 (KSPLLQSTPKPNINNPDNENKSKHDEFDNRYNININESYKNETKSNQRLGEDVPSKKKYP) is disordered. A compositionally biased stretch (polar residues) spans 126 to 139 (LLQSTPKPNINNPD). Basic and acidic residues-rich tracts occupy residues 140-151 (NENKSKHDEFDN) and 161-182 (YKNE…KKYP). The stretch at 261–312 (KQKFSMLDSAHSDLELELTSIRERLESLILEKQEEINFWKQRCRALETEKIH) forms a coiled coil. Residues 344 to 356 (PITTKVVSRPSQS) show a composition bias toward polar residues. Disordered regions lie at residues 344–369 (PITT…PSKN) and 510–548 (SRVD…QLNS). A coiled-coil region spans residues 522–548 (RTANAKKRLEERRRRRKLKLQELQLNS).

Self-associates. Interacts with plo1.

It localises to the cytoplasm. It is found in the cytoskeleton. Its subcellular location is the microtubule organizing center. The protein localises to the spindle pole body. Its function is as follows. Required for bipolar spindle formation. May act as a regulator of the p34cdc2/cyclin B kinase. Required for full activation of the plo1 kinase. However, in cut12.1 cells at restrictive temperature the H1 kinase does rise concomitant with entry into mitosis, indicating that cut12 is not required for activation of p34cdc2/cyclin B. The cut12.s11 allele may promote cdc2-independent phosphorylation of SPB proteins thereby overcoming the requirement for cdc25 in cell cycle progression. The sequence is that of Spindle pole body-associated protein cut12 (cut12) from Schizosaccharomyces pombe (strain 972 / ATCC 24843) (Fission yeast).